A 267-amino-acid chain; its full sequence is Undecaprenyl-diphosphatase (267 aa).

A run of 8 helical transmembrane segments spans residues methionine 1 to isoleucine 21, glutamine 39 to phenylalanine 59, tryptophan 87 to isoleucine 107, leucine 111 to valine 131, alanine 149 to isoleucine 169, phenylalanine 189 to leucine 209, phenylalanine 218 to leucine 238, and methionine 246 to leucine 266.

It belongs to the UppP family.

Its subcellular location is the cell inner membrane. It catalyses the reaction di-trans,octa-cis-undecaprenyl diphosphate + H2O = di-trans,octa-cis-undecaprenyl phosphate + phosphate + H(+). Functionally, catalyzes the dephosphorylation of undecaprenyl diphosphate (UPP). Confers resistance to bacitracin. This chain is Undecaprenyl-diphosphatase, found in Aliivibrio salmonicida (strain LFI1238) (Vibrio salmonicida (strain LFI1238)).